Reading from the N-terminus, the 393-residue chain is Prokineticin receptor 1 (393 aa).

The Extracellular segment spans residues 1-62 (METTVGALGE…TNSRTFFAAK (62 aa)). N-linked (GlcNAc...) asparagine glycosylation occurs at asparagine 11. The helical transmembrane segment at 63–83 (IVIGMALVGIMLVCGIGNFIF) threads the bilayer. Over 84-98 (ITALARYKKLRNLTN) the chain is Cytoplasmic. A helical transmembrane segment spans residues 99-119 (LLIANLAISDFLVAIVCCPFE). Over 120 to 146 (MDYYVVRQLSWEHGHVLCASVNYLRTV) the chain is Extracellular. A disulfide bridge links cysteine 137 with cysteine 217. The helical transmembrane segment at 147 to 167 (SLYVSTNALLAIAIDRYLAIV) threads the bilayer. Residues 168–179 (HPLRPRMKCQTA) are Cytoplasmic-facing. Residues 180–200 (AGLIFLVWSVSILIAIPAAYF) form a helical membrane-spanning segment. At 201 to 232 (TTETVLVIVERQEKIFCGQIWPVDQQFYYRSY) the chain is on the extracellular side. A helical transmembrane segment spans residues 233–253 (FLLVFGLEFVGPVVAMTLCYA). Topologically, residues 254 to 282 (RVSRELWFKAVPGFQTEQIRRRLRCRRRT) are cytoplasmic. A helical membrane pass occupies residues 283–303 (VLGLVCVLSAYVLCWAPFYGF). The Extracellular portion of the chain corresponds to 304–322 (TIVRDFFPSVFVKEKHYLT). The helical transmembrane segment at 323–343 (AFYVVECIAMSNSMINTLCFV) threads the bilayer. Residues 344 to 393 (TVRNNTSKYLKRILRLQWRASPSGSKASADLDLRTTGIPATEEVDCIRLK) lie on the Cytoplasmic side of the membrane.

The protein belongs to the G-protein coupled receptor 1 family. Expressed at high levels in the heart, skeletal muscle and pancreas. Expressed at lower levels in the brain, lung, liver and kidney.

The protein localises to the cell membrane. Its function is as follows. Receptor for prokineticin 1. Exclusively coupled to the G(q) subclass of heteromeric G proteins. Activation leads to mobilization of calcium, stimulation of phosphoinositide turnover and activation of p44/p42 mitogen-activated protein kinase. May play a role during early pregnancy. The polypeptide is Prokineticin receptor 1 (Prokr1) (Mus musculus (Mouse)).